The following is a 132-amino-acid chain: Small ribosomal subunit protein uS8 (132 aa).

This sequence belongs to the universal ribosomal protein uS8 family. As to quaternary structure, part of the 30S ribosomal subunit. Contacts proteins S5 and S12.

One of the primary rRNA binding proteins, it binds directly to 16S rRNA central domain where it helps coordinate assembly of the platform of the 30S subunit. The polypeptide is Small ribosomal subunit protein uS8 (Bacillus mycoides (strain KBAB4) (Bacillus weihenstephanensis)).